We begin with the raw amino-acid sequence, 147 residues long: Sec-independent protein translocase protein TatB (147 aa).

A helical transmembrane segment spans residues 2 to 22; the sequence is FDGIGFMELLLIGVLGLVVLG. Polar residues predominate over residues 85–97; sequence QLKQAAQSVNRPY. Residues 85–147 are disordered; that stretch reads QLKQAAQSVN…DTRSNPKANG (63 aa). Over residues 113–133 the composition is skewed to low complexity; the sequence is ASQSVSTEASPSASSAPTSES.

It belongs to the TatB family. The Tat system comprises two distinct complexes: a TatABC complex, containing multiple copies of TatA, TatB and TatC subunits, and a separate TatA complex, containing only TatA subunits. Substrates initially bind to the TatABC complex, which probably triggers association of the separate TatA complex to form the active translocon.

Its subcellular location is the cell inner membrane. Part of the twin-arginine translocation (Tat) system that transports large folded proteins containing a characteristic twin-arginine motif in their signal peptide across membranes. Together with TatC, TatB is part of a receptor directly interacting with Tat signal peptides. TatB may form an oligomeric binding site that transiently accommodates folded Tat precursor proteins before their translocation. The protein is Sec-independent protein translocase protein TatB of Shewanella sp. (strain ANA-3).